The chain runs to 442 residues: MFS transporter asaE (442 aa).

Positions 1–10 (MDRSRTSSQG) are enriched in polar residues. Residues 1 to 43 (MDRSRTSSQGRDVLPPRGDEGRISPSLDKEKSPGPEDQPDAPP) form a disordered region. Over residues 17–34 (RGDEGRISPSLDKEKSPG) the composition is skewed to basic and acidic residues. 12 helical membrane-spanning segments follow: residues 47–67 (LTAW…FGWV), 89–109 (TISW…PIVG), 119–139 (YLII…SIST), 150–170 (ICSA…VSAW), 177–197 (IAFA…PIMV), 206–226 (FGWS…IAIV), 252–272 (PVFI…FIPI), 288–307 (LASY…RLGA), 319–339 (IFIV…IPAT), 342–362 (APII…VSLS), 381–401 (LLFL…GAIL), and 413–433 (IFSG…RIVG).

This sequence belongs to the major facilitator superfamily. Monocarboxylate porter (TC 2.A.1.13) family.

The protein resides in the cell membrane. The protein operates within secondary metabolite biosynthesis. Functionally, MFS transporter; part of the gene cluster that mediates the biosynthesis of aspergillic acid. Probably involved in aspergillic acid metabolism and transport. This chain is MFS transporter asaE, found in Aspergillus flavus (strain ATCC 200026 / FGSC A1120 / IAM 13836 / NRRL 3357 / JCM 12722 / SRRC 167).